The following is a 126-amino-acid chain: Small ribosomal subunit protein uS12 (126 aa).

Residues methionine 1–proline 28 are disordered. Over residues arginine 9–serine 19 the composition is skewed to basic residues. Aspartate 89 bears the 3-methylthioaspartic acid mark. Residues glycine 106–lysine 126 form a disordered region. Residues lysine 109–lysine 126 are compositionally biased toward basic residues.

The protein belongs to the universal ribosomal protein uS12 family. In terms of assembly, part of the 30S ribosomal subunit. Contacts proteins S8 and S17. May interact with IF1 in the 30S initiation complex.

With S4 and S5 plays an important role in translational accuracy. Functionally, interacts with and stabilizes bases of the 16S rRNA that are involved in tRNA selection in the A site and with the mRNA backbone. Located at the interface of the 30S and 50S subunits, it traverses the body of the 30S subunit contacting proteins on the other side and probably holding the rRNA structure together. The combined cluster of proteins S8, S12 and S17 appears to hold together the shoulder and platform of the 30S subunit. In Opitutus terrae (strain DSM 11246 / JCM 15787 / PB90-1), this protein is Small ribosomal subunit protein uS12.